The chain runs to 416 residues: Keratin, type I cuticular Ha1 (416 aa).

The segment at 1 to 56 (MPYNFCLPSLSCRTSCSSRPCVPPSCHSCTLPGACNIPANVSNCNWFCEGSFNGSE) is head. The 312-residue stretch at 56–367 (EKETMQFLND…SLLESEDCNL (312 aa)) folds into the IF rod domain. Residues 57–91 (KETMQFLNDRLASYLEKVRQLERDNAELENLIRER) are coil 1A. A linker 1 region spans residues 92–102 (SQQQEPLLCPS). The segment at 103–203 (YQSYFKTIEE…HEQEVNTLRC (101 aa)) is coil 1B. Residues 204 to 219 (QLGDRLNVEVDAAPTV) are linker 12. The coil 2 stretch occupies residues 220 to 363 (DLNRVLNETR…NTYRSLLESE (144 aa)). The interval 364–416 (DCNLPSNPCATTNACSKPIGPCLSNPCTPCVPPAPCTPCAPRPRCGPCNSFVR) is tail.

It belongs to the intermediate filament family.

The protein is Keratin, type I cuticular Ha1 (KRT31) of Pan troglodytes (Chimpanzee).